A 372-amino-acid chain; its full sequence is Inner membrane protein YbiR (372 aa).

The Periplasmic portion of the chain corresponds to 1–13 (MSLPFLRTLQGDR). 2 helical membrane passes run 14–34 (FFQLLILVGIGLSFFVPFAPK) and 35–55 (SWPAAIDWHTIITLSGLMLLT). Over 56 to 85 (KGVELSGYFDVLGRKMVRRFATERRLAMFM) the chain is Periplasmic. Residues 86–106 (VLAAALLSTFLTNDVALFIVV) traverse the membrane as a helical segment. Residues 107–122 (PLTITLKRLCEIPVNR) lie on the Cytoplasmic side of the membrane. A helical transmembrane segment spans residues 123 to 143 (LIIFEALAVNAGSLLTPIGNP). At 144–155 (QNILIWGRSGLS) the chain is on the periplasmic side. A helical membrane pass occupies residues 156–176 (FAGFIAQMAPLAGAMMLTLLL). Residues 177 to 208 (LCWCCFPGKAMQYHTGVQTPEWKPRLVWSCLG) lie on the Cytoplasmic side of the membrane. The chain crosses the membrane as a helical span at residues 209-229 (LYIVFLTALEFKQELWGLVIV). Residues 230-247 (AAGFALLARRVVLSVDWT) lie on the Periplasmic side of the membrane. The helical transmembrane segment at 248-268 (LLLVFMAMFIDVHLLTQLPAL) threads the bilayer. Topologically, residues 269–283 (QGVLGNVSHLSEPGL) are cytoplasmic. A helical transmembrane segment spans residues 284-304 (WLTAIGLSQVISNVPSTILLL). At 305–309 (NYVPP) the chain is on the periplasmic side. Residues 310–330 (SLLLVWAVNVGGFGLLPGSLA) form a helical membrane-spanning segment. At 331-348 (NLIALRMANDRRIWWRFH) the chain is on the cytoplasmic side. A helical membrane pass occupies residues 349 to 369 (LYSIPMLLWAALVGYVLLVIL). The Periplasmic segment spans residues 370–372 (PAN).

Belongs to the CitM (TC 2.A.11) transporter family.

It is found in the cell inner membrane. In Escherichia coli (strain K12), this protein is Inner membrane protein YbiR (ybiR).